The following is a 652-amino-acid chain: Neuroendocrine convertase 2 (652 aa).

A signal peptide spans 1-22; sequence MKNTHVDLICVFLSIFIGIGEA. A propeptide spanning residues 23 to 107 is cleaved from the precursor; that stretch reads VDVYTNHFHV…QLKGYTRTKR (85 aa). Residues 136 to 481 enclose the Peptidase S8 domain; the sequence is QWYLKNTGQA…FGVLDAAEMV (346 aa). Asn-167 is a glycosylation site (N-linked (GlcNAc...) asparagine). Residues Asp-174 and His-215 each act as charge relay system in the active site. 2 disulfide bridges follow: Cys-232/Cys-382 and Cys-324/Cys-354. The N-linked (GlcNAc...) asparagine glycan is linked to Asn-290. Ser-390 functions as the Charge relay system in the catalytic mechanism. An N-linked (GlcNAc...) asparagine glycan is attached at Asn-451. The region spanning 489–625 is the P/Homo B domain; the sequence is TSPPRYHCTA…ELMLHGTREA (137 aa). Cys-496 and Cys-522 are disulfide-bonded. The segment at 501 to 652 is required for ubiquitination-mediated degradation; the sequence is IDTPHEIPAD…TVQKAHKRSH (152 aa). A glycan (N-linked (GlcNAc...) asparagine) is linked at Asn-542.

It belongs to the peptidase S8 family. Furin subfamily. As to quaternary structure, interacts (via C-terminus) with F-box protein fsn-1 (via SPRY domain); the interaction results in egl-3 proteasomal degradation. In terms of processing, ubiquitinated. As to expression, expressed in head and tail ganglia. Expressed in neurons including mechanosensory and motor neurons, and interneurons (at protein level). Expressed in the nerve ring, ventral nerve cord and intestine.

It localises to the cell projection. The protein resides in the axon. It is found in the cytoplasmic vesicle. The protein localises to the secretory vesicle lumen. Its subcellular location is the secreted. It carries out the reaction Release of protein hormones and neuropeptides from their precursors, generally by hydrolysis of -Lys-Arg-|- bonds.. In terms of biological role, serine endoprotease which cleaves preproteins at paired basic amino acids. Processes FMRFamide-like (flp) and neuropeptide-like protein (nlp) neuropeptides. Probably by processing flp-1 and flp-18, modulates the neuronal excitation-inhibition balance and thus the level of activity of the locomotor circuit. Regulates sensitivity to mechanosensory stimuli. By processing neuropeptides, modulates basal acetylcholine release at the ventral cord neuromuscular junctions. Probably by processing flp neuropeptides, regulates the turning step of male mating behavior. Cleaves pro-insulin-like proteins ins-3, ins-4 and ins-6 into their mature active forms. Together with convertase kpc-1, cleaves pro-insulin-like protein ins-18. By controlling ins-4 and ins-6 processing and thus the activation of the daf-2/InsR pathway, negatively modulates synapse development and synaptic transmission at neuromuscular junctions. Similarly, by controlling ins-4 and ins-6 processing, negatively regulates dauer formation under optimal environmental conditions. Under adverse environmental conditions, may promote dauer formation by processing ins-18, a daf-2/InsR antagonist. May cleave dense-core vesicle membrane protein ida-1. Involved in egg-laying, fat storage and locomotion. The protein is Neuroendocrine convertase 2 of Caenorhabditis elegans.